The following is a 1435-amino-acid chain: Cardiac-enriched FHL2-interacting protein (1435 aa).

4 disordered regions span residues 109–176 (EEKY…PPKF), 203–234 (SNTHQNSYQPGRKHGEQESSKNPEMACHGSSS), 250–270 (FPSPHHKPVTGEPGRGKGTFL), and 291–311 (KDTAGTVPESKAPKHYGDTTL). T120 is modified (phosphothreonine). The span at 133–147 (LRSSNKPVSKVSTLI) shows a compositional bias: polar residues. The span at 149–160 (SFDRTESQRCES) shows a compositional bias: basic and acidic residues. Phosphoserine is present on S323. Disordered regions lie at residues 362–592 (EGKA…LTLS), 609–772 (AERS…EKEN), 795–847 (SQGE…SPSS), 1007–1108 (PEGD…ARVT), 1138–1261 (SPRG…PGGP), and 1363–1435 (QGPR…EGIS). A compositionally biased stretch (basic and acidic residues) spans 389–402 (KGKESLQDTLEEKT). A Phosphoserine modification is found at S470. 4 stretches are compositionally biased toward basic and acidic residues: residues 479-493 (QEKEPSECQSRDSYK), 522-535 (VLDEKTRGKVDGKQ), 609-620 (AERSSYENKEVE), and 650-667 (CNRDPEPGGATEKMKTHQ). Over residues 668–679 (LENGLSRSVSQE) the composition is skewed to polar residues. A compositionally biased stretch (low complexity) spans 727–741 (KFSTSSSDQSFASFD). Residues 751–772 (NQREDRRKDVSAGDSQKDEKEN) show a composition bias toward basic and acidic residues. S816 is subject to Phosphoserine. Polar residues predominate over residues 831 to 847 (KGTTFSQAKDLTPSPSS). The span at 1055–1066 (NSPNPGSPGESS) shows a compositional bias: low complexity. A compositionally biased stretch (polar residues) spans 1067-1082 (ACSPAASNIWEESSQA). The segment covering 1083–1093 (PGGPELLPEEP) has biased composition (low complexity). Residues 1094–1105 (NQASPWASSSPA) are compositionally biased toward polar residues. The segment covering 1182 to 1193 (RRAKKLASKRRK) has biased composition (basic residues). Over residues 1194-1211 (TDQAQEKHGESQEGKPCP) the composition is skewed to basic and acidic residues. The segment covering 1424–1435 (DDLEDFATEGIS) has biased composition (acidic residues).

In terms of assembly, interacts with FHL2. In terms of tissue distribution, expressed in the heart and skeletal muscle.

It is found in the cytoplasm. The protein resides in the myofibril. The protein localises to the sarcomere. It localises to the z line. Plays an important role in cardiomyocyte hypertrophy via activation of the calcineurin/NFAT signaling pathway. This is Cardiac-enriched FHL2-interacting protein from Homo sapiens (Human).